A 517-amino-acid chain; its full sequence is Intermediate filament family orphan 2 (517 aa).

Positions 53–484 (NIHLLKGLNV…RLIKGSADRN (432 aa)) constitute an IF rod domain. Disordered regions lie at residues 104-129 (EQAV…SSGA), 330-349 (KVAS…RFSD), and 478-517 (KGSA…PMVS). Residues 485-497 (SPSPSSVASSDSG) show a composition bias toward low complexity. Over residues 501 to 517 (EIQDEFEREADVEPMVS) the composition is skewed to acidic residues.

It belongs to the intermediate filament family.

This is Intermediate filament family orphan 2 (IFFO2) from Homo sapiens (Human).